Reading from the N-terminus, the 418-residue chain is Tryptophan synthase beta chain (418 aa).

Positions 1–12 (MTSTLPTANTPD) are enriched in polar residues. The segment at 1–21 (MTSTLPTANTPDPASLMPSVR) is disordered. K111 bears the N6-(pyridoxal phosphate)lysine mark.

This sequence belongs to the TrpB family. As to quaternary structure, tetramer of two alpha and two beta chains. It depends on pyridoxal 5'-phosphate as a cofactor.

The enzyme catalyses (1S,2R)-1-C-(indol-3-yl)glycerol 3-phosphate + L-serine = D-glyceraldehyde 3-phosphate + L-tryptophan + H2O. It participates in amino-acid biosynthesis; L-tryptophan biosynthesis; L-tryptophan from chorismate: step 5/5. The beta subunit is responsible for the synthesis of L-tryptophan from indole and L-serine. This is Tryptophan synthase beta chain from Synechococcus sp. (strain CC9311).